The sequence spans 240 residues: Uridylate kinase (240 aa).

Residue Lys-13–Gly-16 participates in ATP binding. An involved in allosteric activation by GTP region spans residues Gly-21–Gly-26. Position 55 (Gly-55) interacts with UMP. Residues Gly-56 and Arg-60 each contribute to the ATP site. Residues Asp-75 and Thr-136–Thr-143 each bind UMP. ATP contacts are provided by Thr-163, Gln-164, Tyr-169, and Asp-172.

Belongs to the UMP kinase family. Homohexamer.

The protein resides in the cytoplasm. The enzyme catalyses UMP + ATP = UDP + ADP. It functions in the pathway pyrimidine metabolism; CTP biosynthesis via de novo pathway; UDP from UMP (UMPK route): step 1/1. Its activity is regulated as follows. Allosterically activated by GTP. Inhibited by UTP. Its function is as follows. Catalyzes the reversible phosphorylation of UMP to UDP. The chain is Uridylate kinase from Rhizobium meliloti (strain 1021) (Ensifer meliloti).